A 103-amino-acid polypeptide reads, in one-letter code: UPF0145 protein BCE_5284 (103 aa).

Belongs to the UPF0145 family.

The protein is UPF0145 protein BCE_5284 of Bacillus cereus (strain ATCC 10987 / NRS 248).